A 1342-amino-acid chain; its full sequence is DNA-directed RNA polymerase subunit beta (1342 aa).

The protein belongs to the RNA polymerase beta chain family. As to quaternary structure, the RNAP catalytic core consists of 2 alpha, 1 beta, 1 beta' and 1 omega subunit. When a sigma factor is associated with the core the holoenzyme is formed, which can initiate transcription.

The catalysed reaction is RNA(n) + a ribonucleoside 5'-triphosphate = RNA(n+1) + diphosphate. DNA-dependent RNA polymerase catalyzes the transcription of DNA into RNA using the four ribonucleoside triphosphates as substrates. This is DNA-directed RNA polymerase subunit beta from Pectobacterium atrosepticum (strain SCRI 1043 / ATCC BAA-672) (Erwinia carotovora subsp. atroseptica).